Consider the following 351-residue polypeptide: Histidine-rich glycoprotein (351 aa).

The first 23 residues, 1 to 23, serve as a signal peptide directing secretion; the sequence is MFTSLKKVATFSFLVWISQYSGS. Positions 24–47 are excised as a propeptide; sequence NSCSSSLVKHIPQTGSNLTFDRVL. Asparagine 40 carries an N-linked (GlcNAc...) asparagine glycan. Residues 57 to 91 show a composition bias toward basic and acidic residues; that stretch reads LHEEHHHHHPEEHHEPHHEEHHHHHPEEHHEPHHE. The segment at 57-351 is disordered; sequence LHEEHHHHHP…DAHHHHHHHH (295 aa). 6 tandem repeats follow at residues 59-74, 75-90, 91-107, 108-123, 124-138, and 139-153. The 2 X 16 AA tandem repeats stretch occupies residues 59–90; it reads EEHHHHHPEEHHEPHHEEHHHHHPEEHHEPHH. The segment at 91-123 is 2 X 17 AA tandem repeats; sequence EEHHHHHPHPHHHHHHHPPHHHHHLGHHHHHHH. The segment covering 92–351 has biased composition (basic residues); sequence EHHHHHPHPH…DAHHHHHHHH (260 aa). A 2 X 15 AA tandem repeats region spans residues 124 to 153; the sequence is AAHHHHHEEHHHHHHAAHHHHHEEHHHHHH. Positions 173–351 are 18 X 10 AA tandem repeats; sequence APHHHHHHHH…DAHHHHHHHH (179 aa).

The protein is Histidine-rich glycoprotein of Plasmodium lophurae.